The sequence spans 523 residues: DNA-directed primase/polymerase protein (523 aa).

Residues Arg-78, 117–119 (DLE), and 168–172 (KFSHH) each bind substrate. Residues Asp-117 and Glu-119 each contribute to the Mn(2+) site. A disordered region spans residues 203–230 (LKKSNPEAPGENRDDVEGTQAKRRKTEE). Residues 258–261 (RNFR) and Lys-267 each bind substrate. Residues Cys-390, His-397, Cys-417, and Cys-422 each coordinate Zn(2+). Positions 390-423 (CHNVKRFHKSNNIIIVVDLKEEVWYQKCHDPECR) match the Zinc knuckle motif motif. A compositionally biased stretch (low complexity) spans 467 to 477 (APAESTSTTPS). The disordered stretch occupies residues 467–523 (APAESTSTTPSEDTEGWGDWPDDPAYLRALQEVEEEEEDEDEEVPDELLLQAVNECE). Composition is skewed to acidic residues over residues 478 to 488 (EDTEGWGDWPD) and 498 to 512 (EVEE…EVPD).

This sequence belongs to the eukaryotic-type primase small subunit family. Mn(2+) is required as a cofactor.

The protein resides in the nucleus. It is found in the mitochondrion matrix. It localises to the chromosome. It carries out the reaction ssDNA + n NTP = ssDNA/pppN(pN)n-1 hybrid + (n-1) diphosphate.. The enzyme catalyses DNA(n) + a 2'-deoxyribonucleoside 5'-triphosphate = DNA(n+1) + diphosphate. Functionally, DNA primase and DNA polymerase required to tolerate replication-stalling lesions by bypassing them. Required to facilitate mitochondrial and nuclear replication fork progression by initiating de novo DNA synthesis using dNTPs and acting as an error-prone DNA polymerase able to bypass certain DNA lesions. Shows a high capacity to tolerate DNA damage lesions such as 8oxoG and abasic sites in DNA. Provides different translesion synthesis alternatives when DNA replication is stalled: able to synthesize DNA primers downstream of lesions, such as UV lesions, R-loops and G-quadruplexes, to allow DNA replication to continue. Can also realign primers ahead of 'unreadable lesions' such as abasic sites and 6-4 photoproduct (6-4 pyrimidine-pyrimidinone), thereby skipping the lesion. Repriming avoids fork degradation while leading to accumulation of internal ssDNA gaps behind the forks. Also able to incorporate nucleotides opposite DNA lesions such as 8oxoG, like a regular translesion synthesis DNA polymerase. Also required for reinitiating stalled forks after ultraviolet (UV) damage during nuclear DNA replication. Required for mitochondrial DNA (mtDNA) synthesis and replication, by reinitiating synthesis after UV damage or in the presence of chain-terminating nucleotides. In addition to its role in DNA damage response, also required to maintain efficient nuclear and mitochondrial DNA replication in unperturbed cells. The sequence is that of DNA-directed primase/polymerase protein from Danio rerio (Zebrafish).